Consider the following 423-residue polypeptide: Histidine--tRNA ligase (423 aa).

This sequence belongs to the class-II aminoacyl-tRNA synthetase family. As to quaternary structure, homodimer.

The protein resides in the cytoplasm. The enzyme catalyses tRNA(His) + L-histidine + ATP = L-histidyl-tRNA(His) + AMP + diphosphate + H(+). In Phytoplasma mali (strain AT), this protein is Histidine--tRNA ligase.